Reading from the N-terminus, the 258-residue chain is Ribose-5-phosphate isomerase (258 aa).

It belongs to the ribose 5-phosphate isomerase family.

Its subcellular location is the cytoplasm. The catalysed reaction is aldehydo-D-ribose 5-phosphate = D-ribulose 5-phosphate. Its pathway is carbohydrate degradation; pentose phosphate pathway; D-ribose 5-phosphate from D-ribulose 5-phosphate (non-oxidative stage): step 1/1. This chain is Ribose-5-phosphate isomerase (RKI1), found in Saccharomyces cerevisiae (strain YJM789) (Baker's yeast).